The sequence spans 644 residues: Exoribonuclease 2 (644 aa).

The region spanning 189 to 516 is the RNB domain; it reads RQDLTALNFV…NHRLLKAVIK (328 aa). Positions 561–643 constitute an S1 motif domain; the sequence is NTRFAAEIID…ETRSIIARPA (83 aa).

Belongs to the RNR ribonuclease family. RNase II subfamily.

It is found in the cytoplasm. The catalysed reaction is Exonucleolytic cleavage in the 3'- to 5'-direction to yield nucleoside 5'-phosphates.. In terms of biological role, involved in mRNA degradation. Hydrolyzes single-stranded polyribonucleotides processively in the 3' to 5' direction. The chain is Exoribonuclease 2 from Salmonella paratyphi A (strain ATCC 9150 / SARB42).